The primary structure comprises 222 residues: MALELADYERKARESVMAFWGNREKARQKQQESGKPDQGERRRDRRKNMDGFCALVIDIIRANGLHRAEIHQKRALLTLPGYFRPTKLWDLLVIQDRRLVAALEFKSQVGPSFGNNFNNRTEEAIGTAHDLWTAYREGAFGQSPRPFVGWLMLVEDAPESNQRRADTSPHFRCSRSSRAHPTYGGMTSSASGSSRSSFTPRPRSSPRRAPPPRQGRIPSPRI.

2 disordered regions span residues 21–45 (GNREKARQKQQESGKPDQGERRRDR) and 161–222 (NQRR…SPRI). The segment covering 22 to 42 (NREKARQKQQESGKPDQGERR) has biased composition (basic and acidic residues). Low complexity predominate over residues 188–202 (SSASGSSRSSFTPRP).

The protein belongs to the XhoI type II restriction endonuclease family.

The enzyme catalyses Endonucleolytic cleavage of DNA to give specific double-stranded fragments with terminal 5'-phosphates.. Its function is as follows. A P subtype restriction enzyme that recognizes the double-stranded sequence 5'-CTCGAG-3' and cleaves after C-1. The chain is Type II restriction enzyme AbrI (abrIR) from Azospirillum brasilense.